The sequence spans 264 residues: Pyridoxine 5'-phosphate synthase (264 aa).

Residues 1 to 21 are compositionally biased toward polar residues; sequence MTDTAQILPTTLEQNPQNTSK. The tract at residues 1–22 is disordered; that stretch reads MTDTAQILPTTLEQNPQNTSKK. N28 provides a ligand contact to 3-amino-2-oxopropyl phosphate. 30–31 contributes to the 1-deoxy-D-xylulose 5-phosphate binding site; sequence DH. Position 39 (R39) interacts with 3-amino-2-oxopropyl phosphate. H64 functions as the Proton acceptor in the catalytic mechanism. 1-deoxy-D-xylulose 5-phosphate-binding residues include R66 and H71. E91 (proton acceptor) is an active-site residue. T121 is a 1-deoxy-D-xylulose 5-phosphate binding site. H217 (proton donor) is an active-site residue. 3-amino-2-oxopropyl phosphate-binding positions include G218 and 239 to 240; that span reads GH.

This sequence belongs to the PNP synthase family. As to quaternary structure, homooctamer; tetramer of dimers.

The protein localises to the cytoplasm. The enzyme catalyses 3-amino-2-oxopropyl phosphate + 1-deoxy-D-xylulose 5-phosphate = pyridoxine 5'-phosphate + phosphate + 2 H2O + H(+). The protein operates within cofactor biosynthesis; pyridoxine 5'-phosphate biosynthesis; pyridoxine 5'-phosphate from D-erythrose 4-phosphate: step 5/5. Functionally, catalyzes the complicated ring closure reaction between the two acyclic compounds 1-deoxy-D-xylulose-5-phosphate (DXP) and 3-amino-2-oxopropyl phosphate (1-amino-acetone-3-phosphate or AAP) to form pyridoxine 5'-phosphate (PNP) and inorganic phosphate. The polypeptide is Pyridoxine 5'-phosphate synthase (Psychrobacter cryohalolentis (strain ATCC BAA-1226 / DSM 17306 / VKM B-2378 / K5)).